A 282-amino-acid chain; its full sequence is 4-hydroxybenzoate octaprenyltransferase (282 aa).

Transmembrane regions (helical) follow at residues 17-37 (IGIL…NQGF), 40-60 (IDLL…GCVI), 90-110 (AFIL…KLPI), 113-133 (FYFA…KRFL), 135-155 (APQL…FIAS), 163-183 (FIVL…MYAM), 207-227 (LIIA…AINK), 231-251 (WFFY…LKLI), and 262-282 (AFLV…LALI).

This sequence belongs to the UbiA prenyltransferase family. Requires Mg(2+) as cofactor.

It is found in the cell inner membrane. It carries out the reaction all-trans-octaprenyl diphosphate + 4-hydroxybenzoate = 4-hydroxy-3-(all-trans-octaprenyl)benzoate + diphosphate. Its pathway is cofactor biosynthesis; ubiquinone biosynthesis. Catalyzes the prenylation of para-hydroxybenzoate (PHB) with an all-trans polyprenyl group. Mediates the second step in the final reaction sequence of ubiquinone-8 (UQ-8) biosynthesis, which is the condensation of the polyisoprenoid side chain with PHB, generating the first membrane-bound Q intermediate 3-octaprenyl-4-hydroxybenzoate. This chain is 4-hydroxybenzoate octaprenyltransferase, found in Legionella pneumophila (strain Corby).